The sequence spans 219 residues: Elongation factor Ts (219 aa).

An involved in Mg(2+) ion dislocation from EF-Tu region spans residues 82–85 (TDFV).

This sequence belongs to the EF-Ts family.

The protein localises to the cytoplasm. Functionally, associates with the EF-Tu.GDP complex and induces the exchange of GDP to GTP. It remains bound to the aminoacyl-tRNA.EF-Tu.GTP complex up to the GTP hydrolysis stage on the ribosome. This chain is Elongation factor Ts, found in Anaeromyxobacter dehalogenans (strain 2CP-C).